Reading from the N-terminus, the 224-residue chain is 7-cyano-7-deazaguanine synthase (224 aa).

9-19 contacts ATP; the sequence is LSGGLDSATAL. Positions 188, 198, 201, and 204 each coordinate Zn(2+).

This sequence belongs to the QueC family. Zn(2+) serves as cofactor.

It carries out the reaction 7-carboxy-7-deazaguanine + NH4(+) + ATP = 7-cyano-7-deazaguanine + ADP + phosphate + H2O + H(+). Its pathway is purine metabolism; 7-cyano-7-deazaguanine biosynthesis. Its function is as follows. Catalyzes the ATP-dependent conversion of 7-carboxy-7-deazaguanine (CDG) to 7-cyano-7-deazaguanine (preQ(0)). The sequence is that of 7-cyano-7-deazaguanine synthase from Thiobacillus denitrificans (strain ATCC 25259 / T1).